Here is a 119-residue protein sequence, read N- to C-terminus: Large ribosomal subunit protein bL20 (119 aa).

The protein belongs to the bacterial ribosomal protein bL20 family.

Its function is as follows. Binds directly to 23S ribosomal RNA and is necessary for the in vitro assembly process of the 50S ribosomal subunit. It is not involved in the protein synthesizing functions of that subunit. The chain is Large ribosomal subunit protein bL20 from Azoarcus sp. (strain BH72).